Reading from the N-terminus, the 407-residue chain is Tryptophan synthase beta chain (407 aa).

Position 91 is an N6-(pyridoxal phosphate)lysine (lysine 91).

Belongs to the TrpB family. Tetramer of two alpha and two beta chains. Pyridoxal 5'-phosphate is required as a cofactor.

The enzyme catalyses (1S,2R)-1-C-(indol-3-yl)glycerol 3-phosphate + L-serine = D-glyceraldehyde 3-phosphate + L-tryptophan + H2O. The protein operates within amino-acid biosynthesis; L-tryptophan biosynthesis; L-tryptophan from chorismate: step 5/5. Its function is as follows. The beta subunit is responsible for the synthesis of L-tryptophan from indole and L-serine. The chain is Tryptophan synthase beta chain from Streptococcus pneumoniae (strain P1031).